The sequence spans 158 residues: Aspartate carbamoyltransferase regulatory chain (158 aa).

Zn(2+)-binding residues include cysteine 111, cysteine 116, cysteine 140, and cysteine 143.

The protein belongs to the PyrI family. In terms of assembly, contains catalytic and regulatory chains. It depends on Zn(2+) as a cofactor.

In terms of biological role, involved in allosteric regulation of aspartate carbamoyltransferase. This chain is Aspartate carbamoyltransferase regulatory chain, found in Metallosphaera sedula (strain ATCC 51363 / DSM 5348 / JCM 9185 / NBRC 15509 / TH2).